Consider the following 162-residue polypeptide: UPF0763 protein Sdel_0383 (162 aa).

It belongs to the UPF0763 family.

The sequence is that of UPF0763 protein Sdel_0383 from Sulfurospirillum deleyianum (strain ATCC 51133 / DSM 6946 / 5175).